Reading from the N-terminus, the 238-residue chain is Ion-translocating oxidoreductase complex subunit E (238 aa).

Transmembrane regions (helical) follow at residues 20-40 (ALVQ…VVNA), 41-61 (LGLG…VSLI), 72-92 (PAFV…MKAF), 95-115 (ELYQ…AVLG), 130-150 (AVDG…VGAV), and 185-205 (NVIF…LIAA).

The protein belongs to the NqrDE/RnfAE family. As to quaternary structure, the complex is composed of six subunits: RnfA, RnfB, RnfC, RnfD, RnfE and RnfG.

Its subcellular location is the cell inner membrane. In terms of biological role, part of a membrane-bound complex that couples electron transfer with translocation of ions across the membrane. The polypeptide is Ion-translocating oxidoreductase complex subunit E (Cellvibrio japonicus (strain Ueda107) (Pseudomonas fluorescens subsp. cellulosa)).